The sequence spans 626 residues: METKQFKAESKRLLDLMINSIYTHKEIFLRELISNSSDAIDKIYYKTLTDDSLKFERDDYYIRVVSDKENRILKIADTGIGMTKEELENNLGVIAKSGSLQFKKENEVKEGYDIIGQFGVGFYSAFLVSDDVTVISKAFGSNEAYKWNSKGAEGYTIEPCEKEAYGTEIILKIKDNTEEENYDEFLEEYTLKSIIKKYSDFIRYPIKMDLTKTKPKEDNKEEFEEYKEEETINSMVPIWRKNKNELKSEDYENFYAEKHYGFDKPIKYIHTSVDGVVSYNAILFIPETTPYDFYTKEYEKGLELYSSGVLIMNKCGDLLPDYFGFVKGIVDSEDLSLNISREILQHDRQLKLIAKNIKTKIKNELESLLKKERDKYEKFYESFGRQLKYGVYSDFGSNKDILQDLLMFYSSKEKKMVTLAEYVSRMPEEQKYIYYAVGESNERIEKLPQIEGVLDKGYEVLYFTDDIDEFAIKMLMNYKEKEFKSVSSGDLGIEGEEKENTSNSDDKKNKELFESMKDILSGKVKDVRASKRLKNHPVCLANEGELSIEMEKVLNAMPNNQNIKADKVLEININHDVFKSLKEAYEGDKEKLKLYTDLLYNQALLIEGLAINDPVEFTNNICKIMK.

The a; substrate-binding stretch occupies residues 1-341; sequence METKQFKAES…SEDLSLNISR (341 aa). The tract at residues 342–552 is b; sequence EILQHDRQLK…EGELSIEMEK (211 aa). The c stretch occupies residues 553 to 626; the sequence is VLNAMPNNQN…FTNNICKIMK (74 aa).

Belongs to the heat shock protein 90 family. Homodimer.

The protein resides in the cytoplasm. Functionally, molecular chaperone. Has ATPase activity. The protein is Chaperone protein HtpG of Clostridium botulinum (strain 657 / Type Ba4).